Here is a 199-residue protein sequence, read N- to C-terminus: NADH-quinone oxidoreductase subunit C (199 aa).

The protein belongs to the complex I 30 kDa subunit family. In terms of assembly, NDH-1 is composed of 14 different subunits. Subunits NuoB, C, D, E, F, and G constitute the peripheral sector of the complex.

Its subcellular location is the cell inner membrane. It carries out the reaction a quinone + NADH + 5 H(+)(in) = a quinol + NAD(+) + 4 H(+)(out). Its function is as follows. NDH-1 shuttles electrons from NADH, via FMN and iron-sulfur (Fe-S) centers, to quinones in the respiratory chain. The immediate electron acceptor for the enzyme in this species is believed to be ubiquinone. Couples the redox reaction to proton translocation (for every two electrons transferred, four hydrogen ions are translocated across the cytoplasmic membrane), and thus conserves the redox energy in a proton gradient. The chain is NADH-quinone oxidoreductase subunit C from Roseobacter denitrificans (strain ATCC 33942 / OCh 114) (Erythrobacter sp. (strain OCh 114)).